The sequence spans 387 residues: MNLHEYQAKDLLESYGLKVQKGIVAHNPNEAAQAFDQLGGKFAVVKAQVHAGGRGKAGGVKVVKSSQEAREVAESLIGKNLVTFQTDAEGQPVNSVGVFEDVYPVTRELYLGAVVDRSSRKVTFMASTEGGVDIEEVAHNSPEKILKVEVDPLVGLQPFQAREVAFKLGLEGKQINDFVKTMLGAYKAFIECDFALFEINPLAVRENGEIVCVDGKINLDSNALYRHPKLLALRDKSQENAKELKASEHELNYVALEGNIGCMVNGAGLAMATMDIIQLYGGKPANFLDVGGGATKERVIEAFKLILDDENVKAILINIFGGIVRCDMIAEAIIEAVKEVNVTVPVVVRLEGNNAEKGAKILADSGLKLIPADGLADAADKVVKSLG.

Residues 9–245 (KDLLESYGLK…KSQENAKELK (237 aa)) form the ATP-grasp domain. ATP contacts are provided by residues Lys-46, 53 to 55 (GRG), Glu-100, Tyr-103, and Glu-108. Residues Asn-200 and Asp-214 each coordinate Mg(2+). Residues Asn-265 and 322-324 (GIV) each bind substrate.

This sequence belongs to the succinate/malate CoA ligase beta subunit family. As to quaternary structure, heterotetramer of two alpha and two beta subunits. Requires Mg(2+) as cofactor.

It carries out the reaction succinate + ATP + CoA = succinyl-CoA + ADP + phosphate. The catalysed reaction is GTP + succinate + CoA = succinyl-CoA + GDP + phosphate. The protein operates within carbohydrate metabolism; tricarboxylic acid cycle; succinate from succinyl-CoA (ligase route): step 1/1. Functionally, succinyl-CoA synthetase functions in the citric acid cycle (TCA), coupling the hydrolysis of succinyl-CoA to the synthesis of either ATP or GTP and thus represents the only step of substrate-level phosphorylation in the TCA. The beta subunit provides nucleotide specificity of the enzyme and binds the substrate succinate, while the binding sites for coenzyme A and phosphate are found in the alpha subunit. The protein is Succinate--CoA ligase [ADP-forming] subunit beta of Francisella tularensis subsp. tularensis (strain FSC 198).